A 719-amino-acid chain; its full sequence is DNA replication licensing factor MCM7 (719 aa).

Ala2 carries the post-translational modification N-acetylalanine. Glycyl lysine isopeptide (Lys-Gly) (interchain with G-Cter in SUMO2) cross-links involve residues Lys15 and Lys28. Ser314 is subject to Phosphoserine. Positions Phe332–Thr538 constitute an MCM domain. Residue Tyr345 participates in ATP binding. Ser365 carries the post-translational modification Phosphoserine. Gly384, Ala386, Lys387, Ser388, and Asn489 together coordinate ATP. Ser500 carries the post-translational modification Phosphoserine. The Arginine finger signature appears at Ser513–Asp516. Arg514 provides a ligand contact to ATP. Positions Ile521 to Ala564 are interaction with RAD17. The interaction with ATRIP stretch occupies residues Leu577–Val719. ATP is bound at residue Arg604. Ser678 bears the Phosphoserine mark.

The protein belongs to the MCM family. As to quaternary structure, component of the MCM2-7 complex. The complex forms a toroidal hexameric ring with the proposed subunit order MCM2-MCM6-MCM4-MCM7-MCM3-MCM5. Component of the CMG helicase complex, a hexameric ring of related MCM2-7 subunits stabilized by CDC45 and the tetrameric GINS complex. Interacts with the ATR-ATRIP complex and with RAD17. Interacts with TIPIN. Interacts with MCMBP. Interacts with ANKRD17. Component of the replisome complex composed of at least DONSON, MCM2, MCM7, PCNA and TICRR. Post-translationally, O-glycosylated (O-GlcNAcylated), in a cell cycle-dependent manner. Ubiquitinated by ECS(LRR1) E3 ubiquitin-protein ligase complex when forks converge following formation of DNA interstrand cross-links. During mitosis, ubiquitinated by TRAIP when forks converge following formation of DNA interstrand cross-links. Short ubiquitin chains on MCM7 promote recruitment of DNA glycosylase NEIL3. If the interstrand cross-link cannot be cleaved by NEIL3, the ubiquitin chains continue to grow on MCM7, promoting the unloading of the CMG helicase complex by the VCP/p97 ATPase.

The protein localises to the nucleus. Its subcellular location is the chromosome. It carries out the reaction ATP + H2O = ADP + phosphate + H(+). In terms of biological role, acts as a component of the MCM2-7 complex (MCM complex) which is the replicative helicase essential for 'once per cell cycle' DNA replication initiation and elongation in eukaryotic cells. Core component of CDC45-MCM-GINS (CMG) helicase, the molecular machine that unwinds template DNA during replication, and around which the replisome is built. The active ATPase sites in the MCM2-7 ring are formed through the interaction surfaces of two neighboring subunits such that a critical structure of a conserved arginine finger motif is provided in trans relative to the ATP-binding site of the Walker A box of the adjacent subunit. The six ATPase active sites, however, are likely to contribute differentially to the complex helicase activity. Uncomplexed form does not show ATPase or DNA helicase. Required for S-phase checkpoint activation upon UV-induced damage. In Mus musculus (Mouse), this protein is DNA replication licensing factor MCM7 (Mcm7).